A 406-amino-acid polypeptide reads, in one-letter code: Olfactomedin-like protein 3 (406 aa).

Positions 1–21 are cleaved as a signal peptide; it reads MGPSAPLLLFFLLSWPGSLQG. Residues 22 to 101 adopt a coiled-coil conformation; it reads QQHHLVEYME…REVDYLETQN (80 aa). One can recognise an Olfactomedin-like domain in the interval 134 to 401; the sequence is DCSYTISQVR…QIVYKLEMKK (268 aa). Residues C135 and C328 are joined by a disulfide bond. The N-linked (GlcNAc...) asparagine glycan is linked to N248.

Belongs to the OLFML3 family.

Its subcellular location is the secreted. Functionally, secreted scaffold protein that plays an essential role in dorsoventral patterning during early development. Stabilizes axial formation by restricting chordin (CHRD) activity on the dorsal side. Acts by facilitating the association between the tolloid proteases and their substrate chordin (CHRD), leading to enhance chordin (CHRD) degradation. May have matrix-related function involved in placental and embryonic development, or play a similar role in other physiological processes. In Rattus norvegicus (Rat), this protein is Olfactomedin-like protein 3 (Olfml3).